Consider the following 469-residue polypeptide: UDP-N-acetylmuramate--L-alanine ligase (469 aa).

112 to 118 (GTHGKTT) is a binding site for ATP.

This sequence belongs to the MurCDEF family.

The protein localises to the cytoplasm. It carries out the reaction UDP-N-acetyl-alpha-D-muramate + L-alanine + ATP = UDP-N-acetyl-alpha-D-muramoyl-L-alanine + ADP + phosphate + H(+). Its pathway is cell wall biogenesis; peptidoglycan biosynthesis. Functionally, cell wall formation. The protein is UDP-N-acetylmuramate--L-alanine ligase of Methylibium petroleiphilum (strain ATCC BAA-1232 / LMG 22953 / PM1).